The sequence spans 472 residues: Tryptophanase (472 aa).

Lys-270 bears the N6-(pyridoxal phosphate)lysine mark.

Belongs to the beta-eliminating lyase family. As to quaternary structure, homotetramer. The cofactor is pyridoxal 5'-phosphate.

It carries out the reaction L-tryptophan + H2O = indole + pyruvate + NH4(+). It participates in amino-acid degradation; L-tryptophan degradation via pyruvate pathway; indole and pyruvate from L-tryptophan: step 1/1. This chain is Tryptophanase (tnaA), found in Vibrio cholerae serotype O1 (strain ATCC 39315 / El Tor Inaba N16961).